A 203-amino-acid polypeptide reads, in one-letter code: Pectinesterase inhibitor 12 (203 aa).

A signal peptide spans 1–26 (MRMSKALAAVVAISVSLSAAAMGVDA). 2 disulfide bridges follow: cysteine 32–cysteine 47 and cysteine 100–cysteine 140.

Belongs to the PMEI family.

It is found in the secreted. Its subcellular location is the extracellular space. The protein localises to the apoplast. Functionally, pectin methylesterase (PME) inhibitor that inhibits PME in vitro. The sequence is that of Pectinesterase inhibitor 12 from Oryza sativa subsp. japonica (Rice).